A 784-amino-acid chain; its full sequence is Lon protease (784 aa).

Positions 6–207 (LPLMALRDMV…TVITTLTSNI (202 aa)) constitute a Lon N-terminal domain. ATP is bound at residue 356–363 (GPPGVGKT). A Lon proteolytic domain is found at 592 to 773 (EDQIGSTTGL…DQVLKHALVE (182 aa)). Active-site residues include Ser-679 and Lys-722.

Belongs to the peptidase S16 family. Homohexamer. Organized in a ring with a central cavity.

Its subcellular location is the cytoplasm. It catalyses the reaction Hydrolysis of proteins in presence of ATP.. In terms of biological role, ATP-dependent serine protease that mediates the selective degradation of mutant and abnormal proteins as well as certain short-lived regulatory proteins. Required for cellular homeostasis and for survival from DNA damage and developmental changes induced by stress. Degrades polypeptides processively to yield small peptide fragments that are 5 to 10 amino acids long. Binds to DNA in a double-stranded, site-specific manner. The polypeptide is Lon protease (Rickettsia prowazekii (strain Madrid E)).